A 229-amino-acid chain; its full sequence is MNNSAFFRLQQLISPSLPIGAFTYSQGMEWAVECGWIKNADDLHCWLESLLQSSVQTLELPVLARLYHASCHQDREAFTHWAHTLLAWRETRELRMEECQRGHALTMVLDRLPDAANWPELQQPEWRDALAQTQLAGFALASARWGIELQQALNGYLWSWLENMVIVAVKLIPLGQSDGQRELYRFSDQLAAITQHALAMDDDDIGSSSPAMAIASCLHETQYCRLFRS.

It belongs to the UreF family. As to quaternary structure, ureD, UreF and UreG form a complex that acts as a GTP-hydrolysis-dependent molecular chaperone, activating the urease apoprotein by helping to assemble the nickel containing metallocenter of UreC. The UreE protein probably delivers the nickel.

Its subcellular location is the cytoplasm. Its function is as follows. Required for maturation of urease via the functional incorporation of the urease nickel metallocenter. This Alcanivorax borkumensis (strain ATCC 700651 / DSM 11573 / NCIMB 13689 / SK2) protein is Urease accessory protein UreF.